The sequence spans 162 residues: Endoribonuclease YbeY (162 aa).

3 residues coordinate Zn(2+): H130, H134, and H140.

It belongs to the endoribonuclease YbeY family. It depends on Zn(2+) as a cofactor.

Its subcellular location is the cytoplasm. Single strand-specific metallo-endoribonuclease involved in late-stage 70S ribosome quality control and in maturation of the 3' terminus of the 16S rRNA. This Nitratidesulfovibrio vulgaris (strain ATCC 29579 / DSM 644 / CCUG 34227 / NCIMB 8303 / VKM B-1760 / Hildenborough) (Desulfovibrio vulgaris) protein is Endoribonuclease YbeY.